The chain runs to 403 residues: Non-structural maintenance of chromosomes element 4 homolog A (403 aa).

Positions 1–45 (MRKTVKRESEATGGKREADDEPEKLRSVKKEKQRKTEADSVRPDE) are enriched in basic and acidic residues. Disordered stretches follow at residues 1 to 57 (MRKT…QGIS), 194 to 226 (LKQRKRAPNRKRTKPGEGVRPDEVDDSQSEEKT), and 342 to 403 (SSCP…LTSS). Basic residues predominate over residues 196 to 206 (QRKRAPNRKRT). Residues 342–353 (SSCPAASAPASA) are compositionally biased toward low complexity. A compositionally biased stretch (polar residues) spans 354–363 (DFTQDTQTTP). The segment covering 384–393 (TPDKEGDGTR) has biased composition (basic and acidic residues). Basic residues predominate over residues 394 to 403 (RRCKRRLTSS).

It belongs to the NSE4 family. As to quaternary structure, interacts with SMC5, SMC6A or SMC6B. The SMC5-SMC6 complex is composed of the SMC5 and SMC6 heterodimer attached via their hinge domain and from the non-SMC subunit NSE4A or NSE4B. As to expression, expressed in seedlings, rosette leaves and floral buds.

It is found in the nucleus. Its function is as follows. Component of the SMC5-SMC6 complex, that promotes sister chromatid alignment after DNA damage and facilitates double-stranded DNA breaks (DSBs) repair via homologous recombination between sister chromatids. This is Non-structural maintenance of chromosomes element 4 homolog A (NSE4A) from Arabidopsis thaliana (Mouse-ear cress).